Here is a 103-residue protein sequence, read N- to C-terminus: UPF0145 protein pXO2-45/BXB0052/GBAA_pXO2_0052 (103 aa).

It belongs to the UPF0145 family.

In Bacillus anthracis, this protein is UPF0145 protein pXO2-45/BXB0052/GBAA_pXO2_0052.